The following is a 316-amino-acid chain: Protein U25 (316 aa).

The protein belongs to the herpesviridae US22 family.

This Human herpesvirus 6B (HHV-6 variant B) protein is Protein U25 (U25).